We begin with the raw amino-acid sequence, 430 residues long: Mucorpepsin (430 aa).

Positions 1 to 22 are cleaved as a signal peptide; it reads MLFSQITSAILLTAASLSLTTA. A propeptide spans 23–69 (activation peptide); the sequence is RPVSKQSESKDKLLALPLTSVSRKFSQTKFGQQQLAEKLAGLKPFSE. Residues 89-421 enclose the Peptidase A1 domain; the sequence is YAIPVSIGTP…DFGNNRIGFA (333 aa). Residue Asp-107 is part of the active site. Cys-120 and Cys-126 are oxidised to a cystine. N-linked (GlcNAc...) asparagine glycans are attached at residues Asn-148 and Asn-257. Asp-306 is a catalytic residue. Cys-341 and Cys-385 are joined by a disulfide.

It belongs to the peptidase A1 family.

The catalysed reaction is Hydrolysis of proteins, favoring hydrophobic residues at P1 and P1'. Clots milk. Does not accept Lys at P1, and hence does not activate trypsinogen.. This enzyme, capable of clotting milk is frequently used for cheese production. The protein is Mucorpepsin of Rhizomucor miehei.